Here is a 1097-residue protein sequence, read N- to C-terminus: uncharacterized protein (1097 aa).

Residues 31–1087 (LLNVARQEEE…TALNKLRTRH (1057 aa)) adopt a coiled-coil conformation.

Belongs to the TRAFAC class myosin-kinesin ATPase superfamily. Myosin family. As to expression, specifically expressed in muscles of the head including temporalis and tensor veli palatini.

Functionally, has most probably lost the function in masticatory muscles contraction suspected for its homologs in dog (AC F1PT61) and apes. This is an uncharacterized protein from Homo sapiens (Human).